The chain runs to 528 residues: Nucleoporin ASM4 (528 aa).

The stretch at 2–3 (FG) is one FG 1 repeat. Residues 23-50 (TTQMFQSQSQLQPQPQPQPQQQQQHLQF) are compositionally biased toward low complexity. 2 disordered regions span residues 23-64 (TTQM…FGNS) and 88-144 (IKNG…SMNA). 2 stretches are compositionally biased toward polar residues: residues 51-64 (NGSSDASSLRFGNS) and 97-108 (QHGQGNNPSWVN). One copy of the FG 2 repeat lies at 61–62 (FG). Positions 110 to 125 (PKKRFTPHTVIRRKTT) are enriched in basic residues. The span at 127–141 (QNSSSDINQNDDSSS) shows a compositional bias: low complexity. FG repeat units follow at residues 195 to 196 (FG), 274 to 275 (FG), and 291 to 292 (FG). The region spanning 265-394 (SSSLSAIIVF…IPYSKNAVEQ (130 aa)) is the RRM Nup35-type domain. Residues Ser458 and Ser464 each carry the phosphoserine modification. The stretch at 490-510 (NLLRNLESKMRQQEAKYRNNE) forms a coiled coil. An FG 6 repeat occupies 523–524 (FG).

Component of the nuclear pore complex (NPC). NPC constitutes the exclusive means of nucleocytoplasmic transport. NPCs allow the passive diffusion of ions and small molecules and the active, nuclear transport receptor-mediated bidirectional transport of macromolecules such as proteins, RNAs, ribonucleoparticles (RNPs), and ribosomal subunits across the nuclear envelope. Due to its 8-fold rotational symmetry, all subunits are present with 8 copies or multiples thereof. ASM4 may form a subcomplex with NUP53, NDC1, and NUP170. In terms of processing, phosphorylated by CDC28.

It is found in the nucleus. Its subcellular location is the nuclear pore complex. It localises to the nucleus membrane. Functions as a component of the nuclear pore complex (NPC). NPC components, collectively referred to as nucleoporins (NUPs), can play the role of both NPC structural components and of docking or interaction partners for transiently associated nuclear transport factors. Active directional transport is assured by both, a Phe-Gly (FG) repeat affinity gradient for these transport factors across the NPC and a transport cofactor concentration gradient across the nuclear envelope (GSP1 and GSP2 GTPases associated predominantly with GTP in the nucleus, with GDP in the cytoplasm). May have a mitosis control function. The sequence is that of Nucleoporin ASM4 (ASM4) from Saccharomyces cerevisiae (strain ATCC 204508 / S288c) (Baker's yeast).